A 64-amino-acid chain; its full sequence is Anti-sigma-G factor Gin (64 aa).

Residues Cys11, Cys14, Cys30, and Cys33 each contribute to the Zn(2+) site.

Probably functions as a homodimer. Interacts with sigma-G factor, recognition occurs via the first 71 residues of sigma-G. It depends on Zn(2+) as a cofactor.

In terms of biological role, an anti-sigma-G factor, prevents premature activation of sigma-G factor in the forespore; overexpression leads to 1000-fold reduction in spore formation, spore formation stops after engulfment. Overexpression also inhibits sigma-G transcription activation activity. When both Gin and sigma-G are expressed in E.coli Gin inhibits sigma-G, strongly suggesting Gin inhibits by direct physical interaction. The protein is Anti-sigma-G factor Gin of Bacillus subtilis (strain 168).